A 336-amino-acid polypeptide reads, in one-letter code: Peroxidase 20 (336 aa).

Positions 1–24 (MEIKQKKVWLSLIVLYAITTSVLG) are cleaved as a signal peptide. Intrachain disulfides connect cysteine 39/cysteine 119, cysteine 72/cysteine 77, cysteine 125/cysteine 331, and cysteine 204/cysteine 239. Histidine 70 functions as the Proton acceptor in the catalytic mechanism. Residues aspartate 71, valine 74, glycine 76, aspartate 78, and serine 80 each contribute to the Ca(2+) site. Proline 167 contacts substrate. Asparagine 170 carries an N-linked (GlcNAc...) asparagine glycan. Histidine 197 contacts heme b. Residue threonine 198 coordinates Ca(2+). Residues aspartate 252, threonine 255, and aspartate 260 each coordinate Ca(2+).

It belongs to the peroxidase family. Classical plant (class III) peroxidase subfamily. The cofactor is heme b. Requires Ca(2+) as cofactor.

Its subcellular location is the secreted. The enzyme catalyses 2 a phenolic donor + H2O2 = 2 a phenolic radical donor + 2 H2O. In terms of biological role, removal of H(2)O(2), oxidation of toxic reductants, biosynthesis and degradation of lignin, suberization, auxin catabolism, response to environmental stresses such as wounding, pathogen attack and oxidative stress. These functions might be dependent on each isozyme/isoform in each plant tissue. Functionally, may be implicated in the systemic acquired resistance response via the salicylic acid signal transduction pathway. The protein is Peroxidase 20 (PER20) of Arabidopsis thaliana (Mouse-ear cress).